The chain runs to 430 residues: Serine--tRNA ligase (430 aa).

An L-serine-binding site is contributed by 231–233; it reads TSE. Position 262-264 (262-264) interacts with ATP; sequence RSE. Glu-285 contacts L-serine. Position 349-352 (349-352) interacts with ATP; it reads EISS. Ser-385 contacts L-serine.

Belongs to the class-II aminoacyl-tRNA synthetase family. Type-1 seryl-tRNA synthetase subfamily. As to quaternary structure, homodimer. The tRNA molecule binds across the dimer.

Its subcellular location is the cytoplasm. The catalysed reaction is tRNA(Ser) + L-serine + ATP = L-seryl-tRNA(Ser) + AMP + diphosphate + H(+). The enzyme catalyses tRNA(Sec) + L-serine + ATP = L-seryl-tRNA(Sec) + AMP + diphosphate + H(+). It functions in the pathway aminoacyl-tRNA biosynthesis; selenocysteinyl-tRNA(Sec) biosynthesis; L-seryl-tRNA(Sec) from L-serine and tRNA(Sec): step 1/1. Its function is as follows. Catalyzes the attachment of serine to tRNA(Ser). Is also able to aminoacylate tRNA(Sec) with serine, to form the misacylated tRNA L-seryl-tRNA(Sec), which will be further converted into selenocysteinyl-tRNA(Sec). The sequence is that of Serine--tRNA ligase from Roseobacter denitrificans (strain ATCC 33942 / OCh 114) (Erythrobacter sp. (strain OCh 114)).